A 784-amino-acid chain; its full sequence is Phosphate transporter PHO1 homolog 1 (784 aa).

The Cytoplasmic portion of the chain corresponds to 1 to 387 (MVKFTKQFEG…HHRKESHSVT (387 aa)). In terms of domain architecture, SPX spans 2 to 335 (VKFTKQFEGQ…GKQILPIYLK (334 aa)). A helical membrane pass occupies residues 388–408 (FFIGLFTGCFVALLAGYIIVA). The Extracellular segment spans residues 409 to 429 (HLTGMYRQHSANTFYMETAYP). A helical membrane pass occupies residues 430–450 (VLSMFGLLFLHLFLYGCNIFM). Residues 451 to 474 (WRKARINYSFIFELGSKNELKYRD) are Cytoplasmic-facing. A helical membrane pass occupies residues 475-495 (VFLICTASMSAIAGVMFVHLS). Topologically, residues 496–507 (LLEKGYSFRQVQ) are extracellular. A helical membrane pass occupies residues 508–528 (VIPGLLLLGFLLILICPLNIF). Topologically, residues 529 to 654 (YKSSRYRLIS…TKVAYEKERS (126 aa)) are cytoplasmic. The region spanning 593-784 (MRVKYYRDLA…LPFREVDEED (192 aa)) is the EXS domain. A helical membrane pass occupies residues 655-675 (LGWLCLVVAMSSVATIYQLYW). Residues 676-703 (DFVKDWGLLQHNSNNPWLRNQLMLRQKS) are Extracellular-facing. The chain crosses the membrane as a helical span at residues 704–724 (IYYFSMVLNLVLRLAWLQTVL). Over 725–784 (HSSFEHVDYRVTGLFLAALEVIRRGQWNFYRLENEHLNNAGKFRAVKTVPLPFREVDEED) the chain is Cytoplasmic.

Belongs to the SYG1 (TC 2.A.94) family. As to expression, expressed in vascular cylinder of roots, leaves, stems, petals, sepals and filaments. Expressed in receptacle, stigma apex and anther connective tissue.

It is found in the cell membrane. Functionally, contributes to the loading of inorganic phosphate (Pi) into the root xylem vessels. The sequence is that of Phosphate transporter PHO1 homolog 1 (PHO1-H1) from Arabidopsis thaliana (Mouse-ear cress).